A 325-amino-acid chain; its full sequence is MKPPVRVAITGAAGHVSYSLIFRIAAGHMLGKDQPVILQLLEIPQAMDVLKGVVLELEDCAFPLLHGLVCSDDVHVAFKDADYAILVGARPRGPGMERSDLIQANGPIFTTQGEALSAEANPEVKVLVVGNPANTNALILLKNAPYINPRNITAMMRLDHNRALFQVAKKMGCHCSDVEKMVVWGNHSASQFPDISYAEIAGEKVAKGVENNWHGDNLIPIIQQRGAAVIKARGASSAASAASAAIDHMRNWVLGSGGKWVSMGVYSRGNSYGLDEDIMFSLPVICEDGDWREVAGLELSSFQRAMLEATEAELQAEREAVADII.

11 to 17 serves as a coordination point for NAD(+); the sequence is GAAGHVS. Substrate is bound by residues Arg-92 and Arg-98. NAD(+) is bound by residues Asn-105, Gln-112, and 129 to 131; that span reads VGN. Positions 131 and 162 each coordinate substrate. The active-site Proton acceptor is His-187.

It belongs to the LDH/MDH superfamily. MDH type 2 family.

It carries out the reaction (S)-malate + NAD(+) = oxaloacetate + NADH + H(+). Functionally, catalyzes the reversible oxidation of malate to oxaloacetate. The polypeptide is Malate dehydrogenase (Desulfotalea psychrophila (strain LSv54 / DSM 12343)).